Here is a 434-residue protein sequence, read N- to C-terminus: Ribosomal protein uS12 methylthiotransferase RimO (434 aa).

Residues 1–107 enclose the MTTase N-terminal domain; sequence MHLGCEKNLV…ILNVLQRIEQ (107 aa). [4Fe-4S] cluster-binding residues include Cys5, Cys41, Cys70, Cys145, Cys149, and Cys152. The 230-residue stretch at 131-360 folds into the Radical SAM core domain; that stretch reads TTGKAVAYLK…ISIQQPIAEL (230 aa). Positions 363–434 constitute a TRAM domain; that stretch reads QNWIGRTVDV…DLYDLTGQVV (72 aa).

This sequence belongs to the methylthiotransferase family. RimO subfamily. The cofactor is [4Fe-4S] cluster.

The protein resides in the cytoplasm. The enzyme catalyses L-aspartate(89)-[ribosomal protein uS12]-hydrogen + (sulfur carrier)-SH + AH2 + 2 S-adenosyl-L-methionine = 3-methylsulfanyl-L-aspartate(89)-[ribosomal protein uS12]-hydrogen + (sulfur carrier)-H + 5'-deoxyadenosine + L-methionine + A + S-adenosyl-L-homocysteine + 2 H(+). Its function is as follows. Catalyzes the methylthiolation of an aspartic acid residue of ribosomal protein uS12. This Prochlorococcus marinus (strain SARG / CCMP1375 / SS120) protein is Ribosomal protein uS12 methylthiotransferase RimO.